The primary structure comprises 355 residues: Peptide chain release factor 1 (355 aa).

Gln-233 carries the N5-methylglutamine modification.

The protein belongs to the prokaryotic/mitochondrial release factor family. Post-translationally, methylated by PrmC. Methylation increases the termination efficiency of RF1.

Its subcellular location is the cytoplasm. Its function is as follows. Peptide chain release factor 1 directs the termination of translation in response to the peptide chain termination codons UAG and UAA. This Rickettsia typhi (strain ATCC VR-144 / Wilmington) protein is Peptide chain release factor 1.